Here is a 130-residue protein sequence, read N- to C-terminus: Encapsulin nanocompartment cargo protein EncC (130 aa).

3 residues coordinate Fe cation: Glu-31, Glu-61, and His-64. The Di-iron-binding motif motif lies at 61–64; the sequence is EREH. The disordered stretch occupies residues 103–130; sequence EAVGKEGAAPSPADVTPEKRLTVGSLRR. The interval 123–130 is probable targeting peptide; that stretch reads LTVGSLRR.

This sequence belongs to the ferritin-like superfamily.

It is found in the encapsulin nanocompartment. Functionally, cargo protein of a type 1 encapsulin nanocompartment. May help nucleate Fe atoms in the interior of the encapsulin nanocompartment. Present in about 92 copies/encapsulin nanocompartment. The sequence is that of Encapsulin nanocompartment cargo protein EncC from Myxococcus xanthus (strain DK1622).